Reading from the N-terminus, the 152-residue chain is Transcriptional regulator MraZ (152 aa).

2 consecutive SpoVT-AbrB domains span residues 5 to 52 (ASAI…PIHE) and 81 to 124 (AHEC…DEAA).

The protein belongs to the MraZ family. In terms of assembly, forms oligomers.

The protein resides in the cytoplasm. It is found in the nucleoid. The chain is Transcriptional regulator MraZ from Shewanella pealeana (strain ATCC 700345 / ANG-SQ1).